A 51-amino-acid chain; its full sequence is Insulin (51 aa).

Cystine bridges form between C7–C37, C19–C50, and C36–C41.

The protein belongs to the insulin family. Heterodimer of a B chain and an A chain linked by two disulfide bonds.

It localises to the secreted. In terms of biological role, insulin decreases blood glucose concentration. It increases cell permeability to monosaccharides, amino acids and fatty acids. It accelerates glycolysis, the pentose phosphate cycle, and glycogen synthesis in liver. The protein is Insulin (INS) of Capra hircus (Goat).